A 440-amino-acid polypeptide reads, in one-letter code: UDP-N-acetylmuramoylalanine--D-glutamate ligase (440 aa).

115-121 (GSNGKST) lines the ATP pocket.

The protein belongs to the MurCDEF family.

The protein localises to the cytoplasm. It catalyses the reaction UDP-N-acetyl-alpha-D-muramoyl-L-alanine + D-glutamate + ATP = UDP-N-acetyl-alpha-D-muramoyl-L-alanyl-D-glutamate + ADP + phosphate + H(+). It functions in the pathway cell wall biogenesis; peptidoglycan biosynthesis. Its function is as follows. Cell wall formation. Catalyzes the addition of glutamate to the nucleotide precursor UDP-N-acetylmuramoyl-L-alanine (UMA). The polypeptide is UDP-N-acetylmuramoylalanine--D-glutamate ligase (Aliivibrio fischeri (strain ATCC 700601 / ES114) (Vibrio fischeri)).